Here is a 440-residue protein sequence, read N- to C-terminus: MQAYFDQLDRVRYEGPQSTNPLAFRHYNPDELVLGKRMEDHLRFAACYWHTFCWNGADMFGVGAFNRPWQQPGEALELAKRKADVAFEFFHKLNVPFYCFHDVDVSPEGASLKEYKNNFAQMVDVLAAKQEQSGVKLLWGTANCFTNPRYGAGAATNPDPEVFSWAATQVVTAMNATHKLGGENYVLWGGREGYETLLNTDLRQEREQIGRFMQMVVEHKHKMGFQGTLLIEPKPQEPTKHQYDYDVATVYGFLKQFGLEKEIKVNIEANHATLAGHSFHHEIATAIALGIFGSVDANRGDAQLGWDTDQFPISVEENALVMYEILKAGGFTTGGLNFDAKVRRQSTDKYDLFYGHIGAMDTMALSLKIAARMVEDGELDKRVAKRYAGWNGELGQQILKGQLSLGELAQYAEQHNLAPVHQSGHQELLENLVNRYLFDK.

Active-site residues include histidine 101 and aspartate 104. Mg(2+) is bound by residues glutamate 232, glutamate 268, histidine 271, aspartate 296, aspartate 307, aspartate 309, and aspartate 339.

The protein belongs to the xylose isomerase family. In terms of assembly, homotetramer. It depends on Mg(2+) as a cofactor.

The protein localises to the cytoplasm. The enzyme catalyses alpha-D-xylose = alpha-D-xylulofuranose. This is Xylose isomerase from Salmonella agona (strain SL483).